A 288-amino-acid polypeptide reads, in one-letter code: Store-operated calcium entry regulator STIMATE (288 aa).

Topologically, residues 1-28 are cytoplasmic; that stretch reads MQGPGGNVSRGLPGGPASTVASGAGRCE. 3 helical membrane passes run 29–49, 69–89, and 102–122; these read SGALMHSFGIFLQGLLGVVAF, IWFLDTSKQAIGMLFIHFANV, and LYLINFLLDATVGMLLIYVGV. Residues 149-153 carry the GXXXG motif motif; it reads GAWVG. Helical transmembrane passes span 156-176 and 194-214; these read ALYIVIMIFEKSVVFIVLLIL and LAIVMLIVPFFVNAFMFWVVD. Residues 215–288 lie on the Cytoplasmic side of the membrane; the sequence is NFLMRKGKTK…KKKHRFGLPV (74 aa). The disordered stretch occupies residues 228–288; it reads EERGANQDSR…KKKHRFGLPV (61 aa). The interval 241-246 is required for localization in the endoplasmic reticulum; that stretch reads KVRYRR. The span at 261–272 shows a compositional bias: acidic residues; the sequence is ADDEMEESDAEE. The span at 277-288 shows a compositional bias: basic residues; that stretch reads PVKKKHRFGLPV.

It belongs to the STIMATE family. In terms of assembly, homooligomer. Interacts with STIM1.

The protein localises to the endoplasmic reticulum membrane. Its function is as follows. Acts as a regulator of store-operated Ca(2+) entry (SOCE) at junctional sites that connect the endoplasmic reticulum (ER) and plasma membrane (PM), called ER-plasma membrane (ER-PM) junction or cortical ER. SOCE is a Ca(2+) influx following depletion of intracellular Ca(2+) stores. Acts by interacting with STIM1, promoting STIM1 conformational switch. Involved in STIM1 relocalization to ER-PM junctions. Contributes to the maintenance and reorganization of store-dependent ER-PM junctions. The polypeptide is Store-operated calcium entry regulator STIMATE (Rattus norvegicus (Rat)).